Reading from the N-terminus, the 219-residue chain is Ribose-5-phosphate isomerase A (219 aa).

Substrate contacts are provided by residues 28-31 (TGST), 81-84 (DGAD), and 94-97 (KGGG). The Proton acceptor role is filled by E103. K121 contacts substrate.

The protein belongs to the ribose 5-phosphate isomerase family. As to quaternary structure, homodimer.

The enzyme catalyses aldehydo-D-ribose 5-phosphate = D-ribulose 5-phosphate. The protein operates within carbohydrate degradation; pentose phosphate pathway; D-ribose 5-phosphate from D-ribulose 5-phosphate (non-oxidative stage): step 1/1. In terms of biological role, catalyzes the reversible conversion of ribose-5-phosphate to ribulose 5-phosphate. This chain is Ribose-5-phosphate isomerase A, found in Shewanella sp. (strain ANA-3).